Consider the following 961-residue polypeptide: MEAESSTPQERIPKLRHGRTSGPARRSTRGQWTAEEDEILRKAVHSFKGKNWKKIAEYFKDRTDVQCLHRWQKVLNPELVKGPWTKEEDEMIVQLIEKYGPKKWSTIARFLPGRIGKQCRERWHNHLNPAINKEAWTQEEELLLIRAHQIYGNRWAELTKFLPGRSDNGIKNHWHSSVKKKLDSYMSSGLLDQYQAMPLAPYERSSTLQSTFMQSNIDGNGCLNGQAENEIDSRQNSSMVGCSLSARDFQNGTINIGHDFHPCGNSQENEQTAYHSEQFYYPELEDISVSISEVSYDMEDCSQFPDHNVSTSPSQDYQFDFQELSDISLEMRHNMSEIPMPYTKESKESTLGAPNSTLNIDVATYTNSANVLTPETECCRVLFPDQESEGHSVSRSLTQEPNEFNQVDRRDPILYSSASDRQISEATKSPTQSSSSRFTATAASGKGTLRPAPLIISPDKYSKKSSGLICHPFEVEPKCTTNGNGSFICIGDPSSSTCVDEGTNNSSEEDQSYHVNDPKKLVPVNDFASLAEDRPHSLPKHEPNMTNEQHHEDMGASSSLGFPSFDLPVFNCDLLQSKNDPLHDYSPLGIRKLLMSTMTCMSPLRLWESPTGKKTLVGAQSILRKRTRDLLTPLSEKRSDKKLEIDIAASLAKDFSRLDVMFDETENRQSNFGNSTGVIHGDRENHFHILNGDGEEWSGKPSSLFSHRMPEETMHIRKSLEKVDQICMEANVREKDDSEQDVENVEFFSGILSEHNTGKPVLSTPGQSVTKAEKAQVSTPRNQLQRTLMATSNKEHHSPSSVCLVINSPSRARNKEGHLVDNGTSNENFSIFCGTPFRRGLESPSAWKSPFYINSLLPSPRFDTDLTIEDMGYIFSPGERSYESIGVMTQINEHTSAFAAFADAMEVSISPTNDDARQKKELDKENNDPLLAERRVLDFNDCESPIKATEEVSSYLLKGCR.

The tract at residues 1 to 33 (MEAESSTPQERIPKLRHGRTSGPARRSTRGQWT) is disordered. 3 HTH myb-type domains span residues 24-75 (ARRS…QKVL), 76-131 (NPEL…NPAI), and 132-182 (NKEA…KKKL). 3 DNA-binding regions (H-T-H motif) span residues 52–75 (WKKI…QKVL), 104–127 (WSTI…HNHL), and 155–178 (WAEL…HSSV). Disordered stretches follow at residues 390–457 (GHSV…LIIS) and 534–555 (RPHS…EDMG). Composition is skewed to polar residues over residues 391–405 (HSVS…NEFN) and 416–430 (SSAS…TKSP). Residues 431–444 (TQSSSSRFTATAAS) are compositionally biased toward low complexity. A compositionally biased stretch (basic and acidic residues) spans 534-554 (RPHSLPKHEPNMTNEQHHEDM). A Nuclear localization signal motif is present at residues 612 to 619 (GKKTLVGA). The interval 756 to 781 (NTGKPVLSTPGQSVTKAEKAQVSTPR) is disordered. Residues 764-781 (TPGQSVTKAEKAQVSTPR) are compositionally biased toward polar residues.

As to quaternary structure, component of a DREAM-like complex which modulates a variety of developmentally regulated genes and of the mitotic genes in proliferating and differentiated cells. Associates with CDKA-1, RBR1 and E2FB, but not with E2FC, in proliferating cells, at early stages of leaves development. As to expression, expressed in roots, cotyledons and leaves, especially in vascular tissues, and in flowers.

Its subcellular location is the nucleus. Its function is as follows. Transcription factor that binds 5'-AACGG-3' motifs in gene promoters. Involved in the regulation of cytokinesis, probably via the activation of several G2/M phase-specific genes transcription (e.g. KNOLLE). Required for the maintenance of diploidy. Involved in transcription regulation during induced endoreduplication at the powdery mildew (e.g. G.orontii) infection site, thus promoting G.orontii growth and reproduction. The chain is Transcription factor MYB3R-4 from Arabidopsis thaliana (Mouse-ear cress).